Here is a 1250-residue protein sequence, read N- to C-terminus: DNA excision repair protein ERCC-6-like (1250 aa).

A Phosphoserine modification is found at serine 14. The TPR 1 repeat unit spans residues 21-54 (YLRYVKEAKEATKNGDLEEAFKLFNLAKDIFPNE). Residues 109–277 (SLYRDGRKGG…WSLFDFACQG (169 aa)) form the Helicase ATP-binding domain. 122–129 (DDMGLGKT) contributes to the ATP binding site. The short motif at 228 to 231 (DEAH) is the DEAH box element. The Helicase C-terminal domain occupies 464 to 620 (FLMDLLKRLR…EKKNPFRYFS (157 aa)). Residues 735–768 (VFPSSTKKKCPKLNKPQPQPSPLLSTHHTQEEDI) are disordered. Phosphoserine is present on residues serine 755, serine 774, serine 807, and serine 810. Threonine 813 is modified (phosphothreonine). At serine 820 the chain carries Phosphoserine. A disordered region spans residues 926-946 (SALQDAQASEAKLEEEPSASS). A phosphoserine mark is found at serine 969, serine 971, serine 995, serine 1004, and serine 1028. The interval 1061–1092 (ASTPKNDISPPGRFFSSQIPSSVNKSMNSRRS) is disordered. At threonine 1063 the chain carries Phosphothreonine; by PLK1. Serine 1069 is modified (phosphoserine). Over residues 1075-1087 (FSSQIPSSVNKSM) the composition is skewed to polar residues. Serine 1098 and serine 1118 each carry phosphoserine. The segment at 1110–1199 (MEERLDDSSE…QDKAAEATND (90 aa)) is disordered. Positions 1115 to 1124 (DDSSEAKGPE) are enriched in basic and acidic residues. A compositionally biased stretch (acidic residues) spans 1125-1135 (DYPEEGVEESS). A compositionally biased stretch (polar residues) spans 1149 to 1173 (ETLSSENKSSWLMTSKPSALAQETS). Serine 1181 and serine 1188 each carry phosphoserine. Residues 1200 to 1233 (YETLVKRGKELKECGKIQEALNCLVKALDIKSAD) form a TPR 2 repeat.

The protein belongs to the SNF2/RAD54 helicase family. In terms of assembly, interacts with PLK1, which phosphorylates it. Both proteins are mutually dependent on each other for correct subcellular localization. Interacts (via N-terminal TPR repeat) with BEND3 (via BEN domains 1 and 3); the interaction is direct. In terms of processing, phosphorylation by PLK1 prevents the association with chromosome arms and restricts its localization to the kinetochore-centromere region.

The protein localises to the chromosome. It is found in the centromere. Its subcellular location is the kinetochore. The enzyme catalyses ATP + H2O = ADP + phosphate + H(+). In terms of biological role, DNA helicase that acts as a tension sensor that associates with catenated DNA which is stretched under tension until it is resolved during anaphase. Functions as ATP-dependent DNA translocase. Can promote Holliday junction branch migration (in vitro). The polypeptide is DNA excision repair protein ERCC-6-like (ERCC6L) (Homo sapiens (Human)).